We begin with the raw amino-acid sequence, 664 residues long: Degenerin del-1 (664 aa).

Residues 1-67 are Cytoplasmic-facing; the sequence is MARKYIDILK…IFTTSLYWVR (67 aa). A helical transmembrane segment spans residues 68 to 88; that stretch reads FLWVVVSLVCICLCMYSFSHV. The Extracellular portion of the chain corresponds to 89 to 607; that stretch reads KDKYDRKEKI…WFNLMADMGG (519 aa). Residues Asn241, Asn300, Asn394, Asn508, and Asn562 are each glycosylated (N-linked (GlcNAc...) asparagine). The chain crosses the membrane as a helical span at residues 608 to 628; the sequence is QAGLFLGASIMSVIEFLFFAV. Over 629–664 the chain is Cytoplasmic; it reads RTLGIACKPRRWRQKTELLRAEELNDAEKGVSTNNN.

This sequence belongs to the amiloride-sensitive sodium channel (TC 1.A.6) family.

The protein resides in the membrane. Probable sodium channel subunit. The polypeptide is Degenerin del-1 (del-1) (Caenorhabditis elegans).